Reading from the N-terminus, the 82-residue chain is Cytochrome b559 subunit alpha (82 aa).

Residues 22-36 (IIHAVTLPAIFIAGF) traverse the membrane as a helical segment. Histidine 24 is a heme binding site.

The protein belongs to the PsbE/PsbF family. Heterodimer of an alpha subunit and a beta subunit. PSII is composed of 1 copy each of membrane proteins PsbA, PsbB, PsbC, PsbD, PsbE, PsbF, PsbH, PsbI, PsbJ, PsbK, PsbL, PsbM, PsbT, PsbX, PsbY, Psb30/Ycf12, peripheral proteins PsbO, CyanoQ (PsbQ), PsbU, PsbV and a large number of cofactors. It forms dimeric complexes. Heme b is required as a cofactor.

The protein localises to the cellular thylakoid membrane. In terms of biological role, this b-type cytochrome is tightly associated with the reaction center of photosystem II (PSII). PSII is a light-driven water:plastoquinone oxidoreductase that uses light energy to abstract electrons from H(2)O, generating O(2) and a proton gradient subsequently used for ATP formation. It consists of a core antenna complex that captures photons, and an electron transfer chain that converts photonic excitation into a charge separation. The chain is Cytochrome b559 subunit alpha from Prochlorococcus marinus (strain MIT 9515).